The sequence spans 578 residues: Isocitrate dehydrogenase kinase/phosphatase (578 aa).

ATP-binding positions include 315–321 (APGIRGM) and Lys336. Asp371 is a catalytic residue.

The protein belongs to the AceK family.

Its subcellular location is the cytoplasm. The catalysed reaction is L-seryl-[isocitrate dehydrogenase] + ATP = O-phospho-L-seryl-[isocitrate dehydrogenase] + ADP + H(+). In terms of biological role, bifunctional enzyme which can phosphorylate or dephosphorylate isocitrate dehydrogenase (IDH) on a specific serine residue. This is a regulatory mechanism which enables bacteria to bypass the Krebs cycle via the glyoxylate shunt in response to the source of carbon. When bacteria are grown on glucose, IDH is fully active and unphosphorylated, but when grown on acetate or ethanol, the activity of IDH declines drastically concomitant with its phosphorylation. This is Isocitrate dehydrogenase kinase/phosphatase from Shigella boydii serotype 18 (strain CDC 3083-94 / BS512).